Here is a 210-residue protein sequence, read N- to C-terminus: Chaperone protein TorD (210 aa).

Belongs to the TorD/DmsD family. TorD subfamily.

The protein resides in the cytoplasm. Involved in the biogenesis of TorA. Acts on TorA before the insertion of the molybdenum cofactor and, as a result, probably favors a conformation of the apoenzyme that is competent for acquiring the cofactor. The protein is Chaperone protein TorD of Salmonella arizonae (strain ATCC BAA-731 / CDC346-86 / RSK2980).